The chain runs to 300 residues: tRNA pseudouridine synthase A (300 aa).

Asp-67 (nucleophile) is an active-site residue. Tyr-125 is a binding site for substrate.

The protein belongs to the tRNA pseudouridine synthase TruA family. Homodimer.

It catalyses the reaction uridine(38/39/40) in tRNA = pseudouridine(38/39/40) in tRNA. Functionally, formation of pseudouridine at positions 38, 39 and 40 in the anticodon stem and loop of transfer RNAs. This is tRNA pseudouridine synthase A from Synechococcus sp. (strain CC9902).